We begin with the raw amino-acid sequence, 295 residues long: NAD kinase (295 aa).

D74 functions as the Proton acceptor in the catalytic mechanism. NAD(+) contacts are provided by residues 74–75 (DG), 148–149 (ND), H159, R176, D178, and 189–194 (TAYALS).

Belongs to the NAD kinase family. The cofactor is a divalent metal cation.

The protein resides in the cytoplasm. It catalyses the reaction NAD(+) + ATP = ADP + NADP(+) + H(+). Its function is as follows. Involved in the regulation of the intracellular balance of NAD and NADP, and is a key enzyme in the biosynthesis of NADP. Catalyzes specifically the phosphorylation on 2'-hydroxyl of the adenosine moiety of NAD to yield NADP. In Legionella pneumophila (strain Paris), this protein is NAD kinase.